We begin with the raw amino-acid sequence, 134 residues long: Histone H2A (134 aa).

Over residues 1-11 the composition is skewed to gly residues; it reads MTGGGKSGGKA. The interval 1–25 is disordered; it reads MTGGGKSGGKASGSKNAQSRSSKAG. Lys-6 and Lys-10 each carry N6-acetyllysine. Gln-107 is modified (N5-methylglutamine). Ser-131 bears the Phosphoserine mark. A [ST]-Q motif motif is present at residues 131 to 132; sequence SQ.

The protein belongs to the histone H2A family. In terms of assembly, the nucleosome is a histone octamer containing two molecules each of H2A, H2B, H3 and H4 assembled in one H3-H4 heterotetramer and two H2A-H2B heterodimers. The octamer wraps approximately 147 bp of DNA. Phosphorylated to form H2AS128ph (gamma-H2A) in response to DNA double-strand breaks (DSBs) generated by exogenous genotoxic agents and by stalled replication forks. Phosphorylation is dependent on the DNA damage checkpoint kinases mec-1/ATR and tel-1/ATM, spreads on either side of a detected DSB site and may mark the surrounding chromatin for recruitment of proteins required for DNA damage signaling and repair. Gamma-H2A is removed from the DNA prior to the strand invasion-primer extension step of the repair process and subsequently dephosphorylated. Dephosphorylation is necessary for efficient recovery from the DNA damage checkpoint. In terms of processing, acetylated by esa-1 to form H2AK4ac and H2AK7ac.

The protein resides in the nucleus. Its subcellular location is the chromosome. Its function is as follows. Core component of nucleosome which plays a central role in DNA double strand break (DSB) repair. Nucleosomes wrap and compact DNA into chromatin, limiting DNA accessibility to the cellular machineries which require DNA as a template. Histones thereby play a central role in transcription regulation, DNA repair, DNA replication and chromosomal stability. DNA accessibility is regulated via a complex set of post-translational modifications of histones, also called histone code, and nucleosome remodeling. The protein is Histone H2A (hh2a) of Neurospora crassa (strain ATCC 24698 / 74-OR23-1A / CBS 708.71 / DSM 1257 / FGSC 987).